The sequence spans 401 residues: Phosrestin-1 (401 aa).

This sequence belongs to the arrestin family. In terms of tissue distribution, inner and outer segments, and the inner plexiform regions of the retina.

Its function is as follows. Undergoes light-induced phosphorylation, probably plays an important role in the photoreceptor transduction. This Drosophila miranda (Fruit fly) protein is Phosrestin-1 (Arr2).